Reading from the N-terminus, the 223-residue chain is Deoxyribose-phosphate aldolase (223 aa).

Residue aspartate 89 is the Proton donor/acceptor of the active site. Residue lysine 152 is the Schiff-base intermediate with acetaldehyde of the active site. Lysine 181 functions as the Proton donor/acceptor in the catalytic mechanism.

The protein belongs to the DeoC/FbaB aldolase family. DeoC type 1 subfamily.

It is found in the cytoplasm. It catalyses the reaction 2-deoxy-D-ribose 5-phosphate = D-glyceraldehyde 3-phosphate + acetaldehyde. It participates in carbohydrate degradation; 2-deoxy-D-ribose 1-phosphate degradation; D-glyceraldehyde 3-phosphate and acetaldehyde from 2-deoxy-alpha-D-ribose 1-phosphate: step 2/2. Its function is as follows. Catalyzes a reversible aldol reaction between acetaldehyde and D-glyceraldehyde 3-phosphate to generate 2-deoxy-D-ribose 5-phosphate. This chain is Deoxyribose-phosphate aldolase, found in Bacillus cereus (strain G9842).